A 708-amino-acid chain; its full sequence is WD repeat-containing and planar cell polarity effector protein fritz homolog (708 aa).

WD repeat units lie at residues 303 to 342 and 343 to 382; these read PLRS…TLLA and QADL…IRAQ.

It belongs to the WD repeat fritz family. As to quaternary structure, interacts with sept2-a. Interacts with intu and fuz; fuz, intu and wdpcp probably form the core CPLANE (ciliogenesis and planar polarity effectors) complex.

It is found in the cell membrane. The protein localises to the cytoplasm. It localises to the cytoskeleton. The protein resides in the cilium axoneme. Its subcellular location is the cilium basal body. In terms of biological role, probable effector of the planar cell polarity signaling pathway which regulates the septin cytoskeleton in both ciliogenesis and collective cell movements including covergent extension during gastrulation. Controls cell shape but not polarization during convergent extension. Proposed to function as core component of the CPLANE (ciliogenesis and planar polarity effectors) complex involved in the recruitment of peripheral IFT-A proteins to basal bodies. In Xenopus laevis (African clawed frog), this protein is WD repeat-containing and planar cell polarity effector protein fritz homolog (wdpcp).